The chain runs to 217 residues: Trichothecene biosynthesis transcription regulator TRI6 (217 aa).

Residues 185–215 (VRCPWHDQEGQQCLRVFSRVDNMRDHYRRIH) form a C2H2-type zinc finger.

The protein localises to the nucleus. In terms of biological role, transcriptional activator of part of the core trichothecene biosynthesis cluster. This Fusarium sporotrichioides protein is Trichothecene biosynthesis transcription regulator TRI6.